The sequence spans 129 residues: D-ribose pyranase (129 aa).

The Proton donor role is filled by His20. Residues Asp28, His96, and 118–120 (YAN) each bind substrate.

It belongs to the RbsD / FucU family. RbsD subfamily. As to quaternary structure, homodecamer.

It is found in the cytoplasm. The enzyme catalyses beta-D-ribopyranose = beta-D-ribofuranose. Its pathway is carbohydrate metabolism; D-ribose degradation; D-ribose 5-phosphate from beta-D-ribopyranose: step 1/2. Its function is as follows. Catalyzes the interconversion of beta-pyran and beta-furan forms of D-ribose. The protein is D-ribose pyranase of Exiguobacterium sp. (strain ATCC BAA-1283 / AT1b).